Reading from the N-terminus, the 89-residue chain is Small ribosomal subunit protein uS15 (89 aa).

The protein belongs to the universal ribosomal protein uS15 family. In terms of assembly, part of the 30S ribosomal subunit. Forms a bridge to the 50S subunit in the 70S ribosome, contacting the 23S rRNA.

Functionally, one of the primary rRNA binding proteins, it binds directly to 16S rRNA where it helps nucleate assembly of the platform of the 30S subunit by binding and bridging several RNA helices of the 16S rRNA. In terms of biological role, forms an intersubunit bridge (bridge B4) with the 23S rRNA of the 50S subunit in the ribosome. This chain is Small ribosomal subunit protein uS15, found in Yersinia pseudotuberculosis serotype O:1b (strain IP 31758).